Reading from the N-terminus, the 623-residue chain is Protein vein (623 aa).

A signal peptide spans 1–40; that stretch reads MYAQHLRKWSLKTKKQLMPLILLIISYMLLLNTCVLSSSA. 4 disordered regions span residues 70–98, 130–162, 184–214, and 229–317; these read IPLS…SSNN, DAGS…SMQK, AASS…NYSS, and PESM…QRYN. 2 stretches are compositionally biased toward low complexity: residues 72–98 and 136–158; these read LSSD…SSNN and PAQQ…QQQQ. A glycan (N-linked (GlcNAc...) asparagine) is linked at N76. N-linked (GlcNAc...) asparagine glycosylation occurs at N211. Basic and acidic residues predominate over residues 233 to 248; the sequence is LEDRSPEQAARSRRDG. The N-linked (GlcNAc...) asparagine glycan is linked to N252. Residues 255–267 show a composition bias toward low complexity; sequence RQQQRTGHRQQLQ. The span at 305 to 316 shows a compositional bias: basic residues; the sequence is QRRKHQRKHQRY. Residues N350, N381, N424, N449, N521, and N574 are each glycosylated (N-linked (GlcNAc...) asparagine). An Ig-like C2-type domain is found at 457-542; the sequence is TKIFSKPSKA…AKNKASKAIA (86 aa). 4 disulfides stabilise this stretch: C478/C531, C566/C577, C571/C588, and C590/C599. Residues 561–599 form the EGF-like domain; it reads ASGIPCNFDYCFHNGTCRMIPDINEVYCRCPTEYFGNRC.

It is found in the secreted. In terms of biological role, ligand for the EGF receptor. Seems to play a role in the global proliferation of wing disc cells and the larval patterning. Shows a strong synergistic genetic interaction with spi, suggesting a molecular interdependence. Required for the development of interveins cells. In Drosophila melanogaster (Fruit fly), this protein is Protein vein (vn).